The primary structure comprises 514 residues: Glucose-1-phosphate adenylyltransferase small subunit 2, chloroplastic/amyloplastic/cytosolic (514 aa).

Residues Met1 to Arg64 constitute a chloroplast transit peptide. The disordered stretch occupies residues Arg35–Thr74. A compositionally biased stretch (low complexity) spans Gly41–Ala52.

It belongs to the bacterial/plant glucose-1-phosphate adenylyltransferase family. As to quaternary structure, heterotetramer composed of two small and two large subunits. As to expression, expressed in leaves.

Its subcellular location is the plastid. The protein localises to the chloroplast. It localises to the amyloplast. It is found in the cytoplasm. The protein resides in the cytosol. The enzyme catalyses alpha-D-glucose 1-phosphate + ATP + H(+) = ADP-alpha-D-glucose + diphosphate. Its pathway is glycan biosynthesis; starch biosynthesis. Its activity is regulated as follows. Activated by 3'phosphoglycerate, inhibited by orthophosphate. Allosteric regulation. Inhibited by inorganic phosphate (Pi). In terms of biological role, involved in synthesis of starch. Catalyzes the synthesis of ADP-glucose, a molecule that serves as an activated glycosyl donor for alpha-1,4-glucan synthesis. The chloroplastic isoform 1 is essential for starch synthesis in leaf chloroplasts and the cytosolic isoform 2 for synthesis in seed endosperm. This Oryza sativa subsp. japonica (Rice) protein is Glucose-1-phosphate adenylyltransferase small subunit 2, chloroplastic/amyloplastic/cytosolic.